Reading from the N-terminus, the 440-residue chain is Ribosomal protein uS12 methylthiotransferase RimO (440 aa).

The region spanning 2–117 (VKVGFVSLGC…LPNVIKKLYE (116 aa)) is the MTTase N-terminal domain. [4Fe-4S] cluster is bound by residues Cys11, Cys47, Cys80, Cys156, Cys160, and Cys163. The region spanning 142-371 (ATPKFYAYIK…LNLQRKISLE (230 aa)) is the Radical SAM core domain. Positions 374–440 (RKRISKKYEV…FEYDLVGEVI (67 aa)) constitute a TRAM domain.

It belongs to the methylthiotransferase family. RimO subfamily. It depends on [4Fe-4S] cluster as a cofactor.

It localises to the cytoplasm. The catalysed reaction is L-aspartate(89)-[ribosomal protein uS12]-hydrogen + (sulfur carrier)-SH + AH2 + 2 S-adenosyl-L-methionine = 3-methylsulfanyl-L-aspartate(89)-[ribosomal protein uS12]-hydrogen + (sulfur carrier)-H + 5'-deoxyadenosine + L-methionine + A + S-adenosyl-L-homocysteine + 2 H(+). Catalyzes the methylthiolation of an aspartic acid residue of ribosomal protein uS12. The chain is Ribosomal protein uS12 methylthiotransferase RimO from Caldicellulosiruptor saccharolyticus (strain ATCC 43494 / DSM 8903 / Tp8T 6331).